The following is a 341-amino-acid chain: Dye-decolorizing peroxidase (341 aa).

Catalysis depends on D148, which acts as the Proton acceptor. H221 is a binding site for heme. The tract at residues 304–341 is targeting peptide; sequence FLDDPPDAPTRLVPEATFTAPISDGSLGIGSLKRSAQQ.

This sequence belongs to the DyP-type peroxidase family. Homohexamer. Heme b is required as a cofactor.

The protein localises to the encapsulin nanocompartment. Its function is as follows. Cargo protein of a type 1 encapsulin nanocompartment. Has both general peroxidase activity and dye-decolorizing activity. Can catalyze the oxidation of both protoporphyrinogen IX and coproporphyrinogen III to their corresponding porphyrins. Also efficiently decolorizes the dyes alizarin red and Cibacron blue F3GA. This cargo-loaded encapsulin nanocompartment is probably involved in protection against oxidative damage. This chain is Dye-decolorizing peroxidase, found in Rhodococcus erythropolis (strain PR4 / NBRC 100887).